Reading from the N-terminus, the 606-residue chain is Aspartate--tRNA(Asp/Asn) ligase (606 aa).

Residue glutamate 187 participates in L-aspartate binding. Residues 211 to 214 (QQFK) form an aspartate region. Residues arginine 233 and histidine 461 each contribute to the L-aspartate site. ATP is bound at residue 233–235 (RDE). An ATP-binding site is contributed by glutamate 495. Residue arginine 502 participates in L-aspartate binding. Position 547 to 550 (547 to 550 (GLDR)) interacts with ATP.

This sequence belongs to the class-II aminoacyl-tRNA synthetase family. Type 1 subfamily. Homodimer.

The protein localises to the cytoplasm. It carries out the reaction tRNA(Asx) + L-aspartate + ATP = L-aspartyl-tRNA(Asx) + AMP + diphosphate. Its function is as follows. Aspartyl-tRNA synthetase with relaxed tRNA specificity since it is able to aspartylate not only its cognate tRNA(Asp) but also tRNA(Asn). Reaction proceeds in two steps: L-aspartate is first activated by ATP to form Asp-AMP and then transferred to the acceptor end of tRNA(Asp/Asn). The sequence is that of Aspartate--tRNA(Asp/Asn) ligase from Chlorobium phaeobacteroides (strain DSM 266 / SMG 266 / 2430).